A 529-amino-acid polypeptide reads, in one-letter code: Peptide chain release factor 3 (529 aa).

The tr-type G domain maps to 11-280; that stretch reads SKRRTFAIIS…GLTEWAPAPK (270 aa). GTP is bound by residues 20–27, 88–92, and 142–145; these read SHPDAGKT, DTPGH, and NKLD.

It belongs to the TRAFAC class translation factor GTPase superfamily. Classic translation factor GTPase family. PrfC subfamily.

It localises to the cytoplasm. Increases the formation of ribosomal termination complexes and stimulates activities of RF-1 and RF-2. It binds guanine nucleotides and has strong preference for UGA stop codons. It may interact directly with the ribosome. The stimulation of RF-1 and RF-2 is significantly reduced by GTP and GDP, but not by GMP. The chain is Peptide chain release factor 3 from Vibrio parahaemolyticus serotype O3:K6 (strain RIMD 2210633).